Here is a 198-residue protein sequence, read N- to C-terminus: ATP-dependent Clp protease proteolytic subunit (198 aa).

Ser-98 functions as the Nucleophile in the catalytic mechanism. His-123 is an active-site residue.

The protein belongs to the peptidase S14 family. As to quaternary structure, fourteen ClpP subunits assemble into 2 heptameric rings which stack back to back to give a disk-like structure with a central cavity, resembling the structure of eukaryotic proteasomes.

It localises to the cytoplasm. It catalyses the reaction Hydrolysis of proteins to small peptides in the presence of ATP and magnesium. alpha-casein is the usual test substrate. In the absence of ATP, only oligopeptides shorter than five residues are hydrolyzed (such as succinyl-Leu-Tyr-|-NHMec, and Leu-Tyr-Leu-|-Tyr-Trp, in which cleavage of the -Tyr-|-Leu- and -Tyr-|-Trp bonds also occurs).. In terms of biological role, cleaves peptides in various proteins in a process that requires ATP hydrolysis. Has a chymotrypsin-like activity. Plays a major role in the degradation of misfolded proteins. In Ehrlichia ruminantium (strain Gardel), this protein is ATP-dependent Clp protease proteolytic subunit.